A 355-amino-acid chain; its full sequence is Erythronate-4-phosphate dehydrogenase (355 aa).

Positions 45 and 66 each coordinate substrate. Asp-146 serves as a coordination point for NAD(+). Arg-206 is a catalytic residue. An NAD(+)-binding site is contributed by Asp-229. The active site involves Glu-234. His-251 functions as the Proton donor in the catalytic mechanism. Gly-254 serves as a coordination point for NAD(+). Tyr-255 is a binding site for substrate.

This sequence belongs to the D-isomer specific 2-hydroxyacid dehydrogenase family. PdxB subfamily. In terms of assembly, homodimer.

It localises to the cytoplasm. The catalysed reaction is 4-phospho-D-erythronate + NAD(+) = (R)-3-hydroxy-2-oxo-4-phosphooxybutanoate + NADH + H(+). It functions in the pathway cofactor biosynthesis; pyridoxine 5'-phosphate biosynthesis; pyridoxine 5'-phosphate from D-erythrose 4-phosphate: step 2/5. Functionally, catalyzes the oxidation of erythronate-4-phosphate to 3-hydroxy-2-oxo-4-phosphonooxybutanoate. This chain is Erythronate-4-phosphate dehydrogenase, found in Acinetobacter baylyi (strain ATCC 33305 / BD413 / ADP1).